Consider the following 203-residue polypeptide: uncharacterized protein (203 aa).

The next 3 helical transmembrane spans lie at isoleucine 60–tyrosine 80, tryptophan 114–threonine 134, and leucine 157–leucine 177. An ATP-binding site is contributed by glycine 192–threonine 199.

It localises to the membrane. This is an uncharacterized protein from Saccharomyces cerevisiae (strain ATCC 204508 / S288c) (Baker's yeast).